The primary structure comprises 185 residues: Ribosome-recycling factor (185 aa).

It belongs to the RRF family.

The protein resides in the cytoplasm. Responsible for the release of ribosomes from messenger RNA at the termination of protein biosynthesis. May increase the efficiency of translation by recycling ribosomes from one round of translation to another. The sequence is that of Ribosome-recycling factor from Pseudomonas entomophila (strain L48).